Consider the following 169-residue polypeptide: Co-chaperone protein HscB homolog (169 aa).

Residues 2–74 (NYFDLFSLPV…CLRAQYLLLL (73 aa)) enclose the J domain.

Belongs to the HscB family. Interacts with HscA and stimulates its ATPase activity.

Its function is as follows. Co-chaperone involved in the maturation of iron-sulfur cluster-containing proteins. Seems to help targeting proteins to be folded toward HscA. This Psychromonas ingrahamii (strain DSM 17664 / CCUG 51855 / 37) protein is Co-chaperone protein HscB homolog.